Consider the following 136-residue polypeptide: Small ribosomal subunit protein uS8c (136 aa).

The protein belongs to the universal ribosomal protein uS8 family. As to quaternary structure, part of the 30S ribosomal subunit.

The protein localises to the plastid. In terms of biological role, one of the primary rRNA binding proteins, it binds directly to 16S rRNA central domain where it helps coordinate assembly of the platform of the 30S subunit. The polypeptide is Small ribosomal subunit protein uS8c (rps8) (Helicosporidium sp. subsp. Simulium jonesii (Green alga)).